We begin with the raw amino-acid sequence, 246 residues long: 4-hydroxy-tetrahydrodipicolinate reductase (246 aa).

9–14 (GNTGRM) provides a ligand contact to NAD(+). R36 contributes to the NADP(+) binding site. NAD(+) is bound by residues 78–80 (GTT) and 104–107 (SPNM). H137 serves as the catalytic Proton donor/acceptor. H138 contacts (S)-2,3,4,5-tetrahydrodipicolinate. K141 (proton donor) is an active-site residue. A (S)-2,3,4,5-tetrahydrodipicolinate-binding site is contributed by 147 to 148 (GT).

Belongs to the DapB family.

The protein localises to the cytoplasm. The catalysed reaction is (S)-2,3,4,5-tetrahydrodipicolinate + NAD(+) + H2O = (2S,4S)-4-hydroxy-2,3,4,5-tetrahydrodipicolinate + NADH + H(+). The enzyme catalyses (S)-2,3,4,5-tetrahydrodipicolinate + NADP(+) + H2O = (2S,4S)-4-hydroxy-2,3,4,5-tetrahydrodipicolinate + NADPH + H(+). The protein operates within amino-acid biosynthesis; L-lysine biosynthesis via DAP pathway; (S)-tetrahydrodipicolinate from L-aspartate: step 4/4. Catalyzes the conversion of 4-hydroxy-tetrahydrodipicolinate (HTPA) to tetrahydrodipicolinate. This Chlamydia muridarum (strain MoPn / Nigg) protein is 4-hydroxy-tetrahydrodipicolinate reductase.